Here is a 106-residue protein sequence, read N- to C-terminus: Large ribosomal subunit protein eL30 (106 aa).

It belongs to the eukaryotic ribosomal protein eL30 family.

The polypeptide is Large ribosomal subunit protein eL30 (Methanococcus maripaludis (strain C7 / ATCC BAA-1331)).